The sequence spans 487 residues: Keratin, type I cytoskeletal 12 (487 aa).

Residues Met1–Ser118 are head. The segment at Glu119 to Trp154 is coil 1A. In terms of domain architecture, IF rod spans Glu119–Asp433. Positions Arg158 to Leu175 are linker 1. The interval Ile176–Phe267 is coil 1B. The tract at residues Gln268 to Val290 is linker 12. The coil 2 stretch occupies residues Leu291 to Gly428. Residues Gly428–Arg461 are disordered. Residues Asp429–Met487 are tail. The segment covering Glu437–Asp452 has biased composition (polar residues).

Belongs to the intermediate filament family. Heterotetramer of two type I and two type II keratins. Keratin-3 associates with keratin-12. Expressed in the corneal epithelium (at protein level). Also expressed in the suprabasal limbal epithelium of the cornea (at protein level).

Its function is as follows. Involved in corneal epithelium organization, integrity and corneal keratin expression. This Mus musculus (Mouse) protein is Keratin, type I cytoskeletal 12 (Krt12).